Reading from the N-terminus, the 493-residue chain is Aspartyl/glutamyl-tRNA(Asn/Gln) amidotransferase subunit B (493 aa).

The segment at 268 to 291 (HYQEADGSTSKGRPKETAEDYRYF) is disordered. The span at 280–291 (RPKETAEDYRYF) shows a compositional bias: basic and acidic residues.

It belongs to the GatB/GatE family. GatB subfamily. Heterotrimer of A, B and C subunits.

It catalyses the reaction L-glutamyl-tRNA(Gln) + L-glutamine + ATP + H2O = L-glutaminyl-tRNA(Gln) + L-glutamate + ADP + phosphate + H(+). The catalysed reaction is L-aspartyl-tRNA(Asn) + L-glutamine + ATP + H2O = L-asparaginyl-tRNA(Asn) + L-glutamate + ADP + phosphate + 2 H(+). Allows the formation of correctly charged Asn-tRNA(Asn) or Gln-tRNA(Gln) through the transamidation of misacylated Asp-tRNA(Asn) or Glu-tRNA(Gln) in organisms which lack either or both of asparaginyl-tRNA or glutaminyl-tRNA synthetases. The reaction takes place in the presence of glutamine and ATP through an activated phospho-Asp-tRNA(Asn) or phospho-Glu-tRNA(Gln). The protein is Aspartyl/glutamyl-tRNA(Asn/Gln) amidotransferase subunit B of Corynebacterium glutamicum (strain ATCC 13032 / DSM 20300 / JCM 1318 / BCRC 11384 / CCUG 27702 / LMG 3730 / NBRC 12168 / NCIMB 10025 / NRRL B-2784 / 534).